A 374-amino-acid polypeptide reads, in one-letter code: MRAPMPQKEQAPRMDTSPPEERLEKQNEKLNNQEEEMEFKELDDLREALANLRGLSEEERSEKAMLRSRIEDQSQLICILKRRSDEALERCQILELLNAELEEKMMQEAEKLKAQGEYTRKLEERFMTLAANHELMIRFKDEYKSENIKLREENEKLKLENSSLFSQALKDEEAKVLQLTVRCEALTGELETLKERCAQDACQAQAREKELLELQSQQACTHTKKTEQLRSQLQTLKQQHQQAVEQMAEAEETHSSLSQELQARLQTVTREKEELLQLSMERGKVLQNKQAEIRQLEEKLEIANEGRKHALERFKQEAVAVDSNLRVRELQCKVDGIQKAYDELRLQSEAFKKHSLDLLSKERELNGKLRHLFP.

The interval 1–38 (MRAPMPQKEQAPRMDTSPPEERLEKQNEKLNNQEEEME) is disordered. Position 16 is a phosphothreonine (Thr-16). Basic and acidic residues predominate over residues 19–32 (PEERLEKQNEKLNN). The stretch at 19–350 (PEERLEKQNE…YDELRLQSEA (332 aa)) forms a coiled coil.

Belongs to the CCDC89 family. Interacts with HEY1.

Its subcellular location is the cytoplasm. It localises to the nucleus. The sequence is that of Coiled-coil domain-containing protein 89 (CCDC89) from Macaca fascicularis (Crab-eating macaque).